A 633-amino-acid chain; its full sequence is Polypeptide N-acetylgalactosaminyltransferase 3 (633 aa).

Topologically, residues Met-1–Lys-19 are cytoplasmic. The helical; Signal-anchor for type II membrane protein transmembrane segment at Phe-20–Met-37 threads the bilayer. The Lumenal segment spans residues Gln-38–Asp-633. Residues Asp-112–Glu-145 form a disordered region. A compositionally biased stretch (basic and acidic residues) spans Ser-134–Glu-145. A catalytic subdomain A region spans residues Leu-184–Arg-293. Mn(2+)-binding residues include Asp-277 and His-279. An N-linked (GlcNAc...) asparagine glycan is attached at Asn-297. Residues Pro-356 to Arg-418 are catalytic subdomain B. His-415 provides a ligand contact to Mn(2+). Residue Asn-484 is glycosylated (N-linked (GlcNAc...) asparagine). A Ricin B-type lectin domain is found at Val-504 to Ser-630. The cysteines at positions 517 and 535 are disulfide-linked. UDP-N-acetyl-alpha-D-galactosamine contacts are provided by Asp-519, Glu-522, His-536, and Asn-541. Cystine bridges form between Cys-561–Cys-574 and Cys-605–Cys-618.

It belongs to the glycosyltransferase 2 family. GalNAc-T subfamily. Mn(2+) is required as a cofactor. As to expression, highly expressed in the reproductive tract, principally in the testis and uterus, and to a lesser degree in the cervix with only trace levels in the ovary. Also expressed at high level in sublingual gland, stomach and colon, with more moderate amounts present in the submandibular and parotid gland as well as the kidney.

Its subcellular location is the golgi apparatus. It localises to the golgi stack membrane. It catalyses the reaction L-seryl-[protein] + UDP-N-acetyl-alpha-D-galactosamine = a 3-O-[N-acetyl-alpha-D-galactosaminyl]-L-seryl-[protein] + UDP + H(+). The catalysed reaction is L-threonyl-[protein] + UDP-N-acetyl-alpha-D-galactosamine = a 3-O-[N-acetyl-alpha-D-galactosaminyl]-L-threonyl-[protein] + UDP + H(+). It participates in protein modification; protein glycosylation. Catalyzes the initial reaction in O-linked oligosaccharide biosynthesis, the transfer of an N-acetyl-D-galactosamine residue to a serine or threonine residue on the protein receptor. Has activity toward HIV envelope glycoprotein gp120. Has activity towards EA2, MUC2 and MUC5. Probably glycosylates fibronectin in vivo. Glycosylates FGF23. The chain is Polypeptide N-acetylgalactosaminyltransferase 3 (Galnt3) from Mus musculus (Mouse).